Reading from the N-terminus, the 476-residue chain is Dermokine (476 aa).

An N-terminal signal peptide occupies residues 1-21 (MKFQGPLACLLLALCLGSGEA). Composition is skewed to gly residues over residues 153–169 (SQGGLGGQGQGNPGGLG), 193–202 (WGQGGNGGPP), 236–259 (GSGGGSSNSGGGSGSQSGSSGSGS), and 268–298 (SSGGSSSGSSSGGSSGGSSGGSSGNSGGSRG). Residues 153-351 (SQGGLGGQGQ…ESGIQNSETS (199 aa)) form a disordered region. The segment covering 299-315 (DSGSESSWGSSTGSSSG) has biased composition (low complexity). Over residues 316–326 (NHGGSGGGNGH) the composition is skewed to gly residues.

Belongs to the dermokine family. Homooligomer. Seems to be able to homodimerize and homotrimerize. O-glycosylated. In terms of tissue distribution, expressed in epidermis; in the spinous and granular layers and in placenta. Also found in the epithelia of the small intestine, macrophages of the lung and endothelial cells of the lung. Isoform 15 is expressed in epidermis and placenta. Isoform 1 is expressed in epidermis.

It localises to the secreted. In terms of biological role, may act as a soluble regulator of keratinocyte differentiation. The sequence is that of Dermokine (DMKN) from Homo sapiens (Human).